The chain runs to 1082 residues: TNF receptor-associated factor homolog 1b (1082 aa).

A disordered region spans residues 1–54 (MAEAVDEDSGVGRSLEESSNGQHSQAGEALSEWRSSGQVENGTPSTSPSYWDID). An N-acetylalanine modification is found at alanine 2. Polar residues predominate over residues 33-49 (WRSSGQVENGTPSTSPS). The MATH domain occupies 67–198 (YGQYTWKIPK…SGCLTIEAKV (132 aa)). Disordered regions lie at residues 358–388 (LPPK…ERDE), 440–666 (TEQR…SNVG), 697–762 (SIVN…QVVL), 780–800 (LSAP…APII), 812–841 (SSVQ…NQQT), and 858–889 (SSSS…PTSS). 2 stretches are compositionally biased toward basic and acidic residues: residues 359–388 (PPKD…ERDE) and 440–453 (TEQR…EREK). The stretch at 446 to 507 (RGAAEREKKS…EEEKDSVTEK (62 aa)) forms a coiled coil. Positions 454–471 (KSKKKQAKQKRNKNKGKD) are enriched in basic residues. Residues 472-488 (KRKEEKVSFATHAKDLE) are compositionally biased toward basic and acidic residues. Low complexity-rich tracts occupy residues 519–534 (GDVS…SADI) and 560–573 (SSEG…ISIS). Composition is skewed to polar residues over residues 588-630 (DDSS…QQVK) and 645-666 (QPST…SNVG). 2 stretches are compositionally biased toward low complexity: residues 858–871 (SSSS…SSHG) and 878–889 (PSSSYSQAPTSS).

In terms of assembly, forms homooligomers. Interacts with SNC1, RPS2 and CPR1/CPR30. Interacts with ATG6.

The protein resides in the cytoplasm. It localises to the cell membrane. Its function is as follows. Functions redundantly with TRAF1A in the regulation of plant immune response. Contributes to the turnover of the nucleotide-binding domain and leucine-rich repeat-containing (NB-LRR) immune receptors SNC1 and RPS2. May associate with an E3 ubiquitin-protein ligase complex, which modulates ubiquitination and subsequent degradation of NB-LRR immune sensors to maintain their homeostasis. Functions redundantly with TRAF1A in the regulation of autophagosome formation. Required for SINAT1- and SINAT2-mediated ubiquitination and destabilization of ATG6. Functions as a molecular adapter that helps to regulate autophagy by modulating ATG6 stability. This chain is TNF receptor-associated factor homolog 1b, found in Arabidopsis thaliana (Mouse-ear cress).